The primary structure comprises 172 residues: Adenine phosphoribosyltransferase (172 aa).

It belongs to the purine/pyrimidine phosphoribosyltransferase family. In terms of assembly, homodimer.

The protein localises to the cytoplasm. It catalyses the reaction AMP + diphosphate = 5-phospho-alpha-D-ribose 1-diphosphate + adenine. It functions in the pathway purine metabolism; AMP biosynthesis via salvage pathway; AMP from adenine: step 1/1. Functionally, catalyzes a salvage reaction resulting in the formation of AMP, that is energically less costly than de novo synthesis. This Methanococcus maripaludis (strain DSM 14266 / JCM 13030 / NBRC 101832 / S2 / LL) protein is Adenine phosphoribosyltransferase.